A 282-amino-acid chain; its full sequence is tRNA (guanine-N(7)-)-methyltransferase (282 aa).

Positions 1-29 (MPHAPAKRQKREEYKNALHEDESNAALPK) are disordered. The span at 10–22 (KREEYKNALHEDE) shows a compositional bias: basic and acidic residues. Residues glycine 104, 153–154 (NT), and cysteine 173 each bind S-adenosyl-L-methionine. Aspartate 176 is an active-site residue. 255–257 (TEE) lines the S-adenosyl-L-methionine pocket.

The protein belongs to the class I-like SAM-binding methyltransferase superfamily. TrmB family. As to quaternary structure, forms a complex with TRM82.

It localises to the nucleus. The enzyme catalyses guanosine(46) in tRNA + S-adenosyl-L-methionine = N(7)-methylguanosine(46) in tRNA + S-adenosyl-L-homocysteine. Its pathway is tRNA modification; N(7)-methylguanine-tRNA biosynthesis. In terms of biological role, catalyzes the formation of N(7)-methylguanine at position 46 (m7G46) in tRNA. This chain is tRNA (guanine-N(7)-)-methyltransferase, found in Phaeosphaeria nodorum (strain SN15 / ATCC MYA-4574 / FGSC 10173) (Glume blotch fungus).